We begin with the raw amino-acid sequence, 481 residues long: Probable zeta-carotene desaturase (481 aa).

It belongs to the zeta carotene desaturase family. The cofactor is decylplastoquinone. 6-decylubiquinone serves as cofactor.

The catalysed reaction is 9,9'-di-cis-zeta-carotene + 2 a quinone = 7,7',9,9'-tetra-cis-lycopene + 2 a quinol. The protein operates within carotenoid biosynthesis; lycopene biosynthesis. Functionally, catalyzes the conversion of zeta-carotene to lycopene via the intermediary of neurosporene. It carries out two consecutive desaturations (introduction of double bonds) at positions C-7 and C-7'. The sequence is that of Probable zeta-carotene desaturase (zds) from Synechococcus elongatus (strain ATCC 33912 / PCC 7942 / FACHB-805) (Anacystis nidulans R2).